We begin with the raw amino-acid sequence, 196 residues long: Agamous-like MADS-box protein AGL27 (196 aa).

One can recognise an MADS-box domain in the interval 1 to 61 (MGRRKIEIKR…GKLYDSSSGD (61 aa)). Residues 80–170 (ALDLEEKIQN…ASQMGKNTLL (91 aa)) form the K-box domain. A disordered region spans residues 175-196 (ERGMFPGSSSGNKIPETLPLLN).

Interacts with AGL39, AGL97 and AGL74. As to expression, expressed in most plant tissues, embryo, seedlings, roots, leaves, stems, inflorescence, pollen, siliques and flowers.

Its subcellular location is the nucleus. Probable transcription factor involved in the negative regulation of flowering time in both long and short days, probably through the photoperiodic and vernalization pathways. Prevents premature flowering. The sequence is that of Agamous-like MADS-box protein AGL27 (AGL27) from Arabidopsis thaliana (Mouse-ear cress).